Consider the following 201-residue polypeptide: Probable GTP-binding protein EngB (201 aa).

Positions 22–197 (TFPEYAFIGR…LNYIESINKE (176 aa)) constitute an EngB-type G domain. GTP-binding positions include 30-37 (GRSNVGKS), 57-61 (GKTML), 75-78 (DLPG), 142-145 (TKAD), and 175-178 (ITSS). 2 residues coordinate Mg(2+): S37 and T59.

The protein belongs to the TRAFAC class TrmE-Era-EngA-EngB-Septin-like GTPase superfamily. EngB GTPase family. The cofactor is Mg(2+).

Necessary for normal cell division and for the maintenance of normal septation. The sequence is that of Probable GTP-binding protein EngB from Bacteroides fragilis (strain YCH46).